We begin with the raw amino-acid sequence, 72 residues long: Large ribosomal subunit protein bL31 (72 aa).

Residues C16, C18, C38, and C41 each coordinate Zn(2+).

The protein belongs to the bacterial ribosomal protein bL31 family. Type A subfamily. Part of the 50S ribosomal subunit. Zn(2+) serves as cofactor.

Its function is as follows. Binds the 23S rRNA. The protein is Large ribosomal subunit protein bL31 of Azoarcus sp. (strain BH72).